The sequence spans 255 residues: ATP synthase subunit a (255 aa).

6 consecutive transmembrane segments (helical) span residues 28-48 (VDSL…FWLG), 86-106 (IAPL…MDLV), 125-145 (ILPT…FFLI), 164-184 (FHPF…IELI), 203-223 (LIFI…GTPW), and 224-244 (AIFH…LTVV).

It belongs to the ATPase A chain family. In terms of assembly, F-type ATPases have 2 components, CF(1) - the catalytic core - and CF(0) - the membrane proton channel. CF(1) has five subunits: alpha(3), beta(3), gamma(1), delta(1), epsilon(1). CF(0) has three main subunits: a(1), b(2) and c(9-12). The alpha and beta chains form an alternating ring which encloses part of the gamma chain. CF(1) is attached to CF(0) by a central stalk formed by the gamma and epsilon chains, while a peripheral stalk is formed by the delta and b chains.

It is found in the cell inner membrane. Key component of the proton channel; it plays a direct role in the translocation of protons across the membrane. The sequence is that of ATP synthase subunit a from Alkalilimnicola ehrlichii (strain ATCC BAA-1101 / DSM 17681 / MLHE-1).